The following is a 109-amino-acid chain: Putative transporter-like protein YIL171W (109 aa).

Positions 1 to 22 (MSGVNNTSANDLSTTESNSNSA) are enriched in polar residues. Residues 1-40 (MSGVNNTSANDLSTTESNSNSAVGAPSVKTEHGDSKDSLN) form a disordered region. The Cytoplasmic portion of the chain corresponds to 1 to 56 (MSGVNNTSANDLSTTESNSNSAVGAPSVKTEHGDSKDSLNLDATEAPIDLPQKPLS). The segment covering 29 to 39 (KTEHGDSKDSL) has biased composition (basic and acidic residues). The helical transmembrane segment at 57-77 (AYTTVAILCLMIAFGGFIFGW) threads the bilayer. Topologically, residues 78 to 109 (DTGTISGFVNLSDFIRRFGQKKTTRGLTTYRK) are extracellular. Asparagine 87 carries an N-linked (GlcNAc...) asparagine glycan.

The protein belongs to the major facilitator superfamily. Sugar transporter (TC 2.A.1.1) family.

It localises to the cell membrane. Functionally, probable glucose transporter. The polypeptide is Putative transporter-like protein YIL171W (Saccharomyces cerevisiae (strain ATCC 204508 / S288c) (Baker's yeast)).